We begin with the raw amino-acid sequence, 66 residues long: Disintegrin EO5B (66 aa).

The Disintegrin domain occupies 1–65 (NSAHPCCDPV…DCPRNPYKGK (65 aa)). Intrachain disulfides connect cysteine 6–cysteine 29, cysteine 20–cysteine 26, cysteine 25–cysteine 50, and cysteine 38–cysteine 57. The Cell attachment site; atypical (VGD) motif lies at 42 to 44 (VGD).

Belongs to the disintegrin family. Dimeric disintegrin subfamily. As to quaternary structure, heterodimer with EO4A or EO5A; disulfide-linked. Expressed by the venom gland.

The protein resides in the secreted. Functionally, poor inhibitor of platelet aggregation. When it dimerizes with EO4A, it inhibits the adhesion of cells expressing the RGD-dependent integrin alpha-5/beta-1 (ITGA5/ITGB1) to immobilized fibronectin. When it dimerizes with EO5A, it inhibits the adhesion of the alpha-4/beta-1 (ITGA4/ITGB1) integrin to VCAM-1. When it dimerizes either with EO4A or EO5A, the inhibition on alpha-IIb/beta-3 (ITGA2B/ITGB3) is low. This is Disintegrin EO5B from Echis ocellatus (Ocellated saw-scaled viper).